Reading from the N-terminus, the 202-residue chain is Cytochrome c oxidase assembly protein CtaG (202 aa).

Residues 1–14 (MSDKAAAPRKQGRN) are Cytoplasmic-facing. Residues 15–37 (NGAVVMMCLSFVFGMGAMSYAAV) traverse the membrane as a helical; Signal-anchor for type II membrane protein segment. The Periplasmic portion of the chain corresponds to 38–202 (PLYRIFCQVT…GGTVKIEKKL (165 aa)).

Belongs to the COX11/CtaG family.

Its subcellular location is the cell inner membrane. Functionally, exerts its effect at some terminal stage of cytochrome c oxidase synthesis, probably by being involved in the insertion of the copper B into subunit I. This Rhizobium etli (strain ATCC 51251 / DSM 11541 / JCM 21823 / NBRC 15573 / CFN 42) protein is Cytochrome c oxidase assembly protein CtaG.